The following is a 670-amino-acid chain: Alpha-1,4-glucan:maltose-1-phosphate maltosyltransferase (670 aa).

Residues lysine 262, glutamine 322, and aspartate 357 each coordinate alpha-maltose 1-phosphate. The active-site Nucleophile is aspartate 393. Asparagine 394 lines the alpha-maltose 1-phosphate pocket. Residue glutamate 422 is the Proton donor of the active site. Alpha-maltose 1-phosphate is bound at residue 534–535 (KY).

It belongs to the glycosyl hydrolase 13 family. GlgE subfamily. Homodimer.

It carries out the reaction alpha-maltose 1-phosphate + [(1-&gt;4)-alpha-D-glucosyl](n) = [(1-&gt;4)-alpha-D-glucosyl](n+2) + phosphate. Maltosyltransferase that uses maltose 1-phosphate (M1P) as the sugar donor to elongate linear or branched alpha-(1-&gt;4)-glucans. Is involved in a branched alpha-glucan biosynthetic pathway from trehalose, together with TreS, Mak and GlgB. In Chlorobaculum tepidum (strain ATCC 49652 / DSM 12025 / NBRC 103806 / TLS) (Chlorobium tepidum), this protein is Alpha-1,4-glucan:maltose-1-phosphate maltosyltransferase.